The sequence spans 497 residues: Glucose-6-phosphate 1-dehydrogenase (497 aa).

Residues 15-22 (GASGDLSK), arginine 49, and lysine 153 each bind NADP(+). D-glucose 6-phosphate is bound by residues lysine 153, 183–187 (HYLGK), glutamate 221, and aspartate 240. Histidine 245 functions as the Proton acceptor in the catalytic mechanism. Arginine 336 contributes to the NADP(+) binding site. Lysine 339 serves as a coordination point for D-glucose 6-phosphate. Residues lysine 345, arginine 349, and arginine 371 each contribute to the NADP(+) site. Glutamine 373 provides a ligand contact to D-glucose 6-phosphate. NADP(+)-binding positions include 379–381 (YLK), 399–401 (DLT), and arginine 466.

Belongs to the glucose-6-phosphate dehydrogenase family.

It catalyses the reaction D-glucose 6-phosphate + NADP(+) = 6-phospho-D-glucono-1,5-lactone + NADPH + H(+). It participates in carbohydrate degradation; pentose phosphate pathway; D-ribulose 5-phosphate from D-glucose 6-phosphate (oxidative stage): step 1/3. In terms of biological role, catalyzes the rate-limiting step of the oxidative pentose-phosphate pathway, which represents a route for the dissimilation of carbohydrates besides glycolysis. The main function of this enzyme is to provide reducing power (NADPH) and pentose phosphates for fatty acid and nucleic acid synthesis. The sequence is that of Glucose-6-phosphate 1-dehydrogenase (ZWF) from Kluyveromyces lactis (strain ATCC 8585 / CBS 2359 / DSM 70799 / NBRC 1267 / NRRL Y-1140 / WM37) (Yeast).